A 390-amino-acid polypeptide reads, in one-letter code: 3-ketoacyl-CoA thiolase (390 aa).

Residue Cys-95 is the Acyl-thioester intermediate of the active site. Catalysis depends on proton acceptor residues His-346 and Cys-376.

It belongs to the thiolase-like superfamily. Thiolase family. In terms of assembly, heterotetramer of two alpha chains (FadB) and two beta chains (FadA).

The protein localises to the cytoplasm. It carries out the reaction an acyl-CoA + acetyl-CoA = a 3-oxoacyl-CoA + CoA. It participates in lipid metabolism; fatty acid beta-oxidation. Its function is as follows. Catalyzes the final step of fatty acid oxidation in which acetyl-CoA is released and the CoA ester of a fatty acid two carbons shorter is formed. The polypeptide is 3-ketoacyl-CoA thiolase (Psychrobacter cryohalolentis (strain ATCC BAA-1226 / DSM 17306 / VKM B-2378 / K5)).